The following is a 782-amino-acid chain: Structure-specific endonuclease subunit SLX4 (782 aa).

2 disordered regions span residues 63-91 (TPKP…MSAM) and 359-425 (KEHE…KKSK). The segment covering 73 to 84 (GLRKTGSRKSKK) has biased composition (basic residues). A compositionally biased stretch (polar residues) spans 374–388 (PAQSLTQSQVPSSID).

This sequence belongs to the SLX4 family. As to quaternary structure, forms a heterodimer with SLX1. Post-translationally, phosphorylated in response to DNA damage.

It is found in the nucleus. Functionally, regulatory subunit of the SLX1-SLX4 structure-specific endonuclease that resolves DNA secondary structures generated during DNA repair and recombination. Has endonuclease activity towards branched DNA substrates, introducing single-strand cuts in duplex DNA close to junctions with ss-DNA. In Scheffersomyces stipitis (strain ATCC 58785 / CBS 6054 / NBRC 10063 / NRRL Y-11545) (Yeast), this protein is Structure-specific endonuclease subunit SLX4.